Here is a 562-residue protein sequence, read N- to C-terminus: Cell division protein FtsZ (562 aa).

GTP contacts are provided by residues 23–27 (GAGGN), 110–112 (GTG), glutamate 141, arginine 145, and aspartate 189. Residues 404 to 413 (PAAARPAQQP) show a composition bias toward low complexity. Disordered stretches follow at residues 404-428 (PAAA…RLDP) and 462-562 (ETAQ…RQAN). Positions 418-428 (FRPDPQLRLDP) are enriched in basic and acidic residues. Low complexity-rich tracts occupy residues 464-486 (AQAA…QPQR) and 500-510 (GLLRRPAAAQP).

It belongs to the FtsZ family. As to quaternary structure, homodimer. Polymerizes to form a dynamic ring structure in a strictly GTP-dependent manner. Interacts directly with several other division proteins. Interacts with FtsZ-like protein (also called FtsZm).

Its subcellular location is the cytoplasm. In terms of biological role, essential cell division protein that forms a contractile ring structure (Z ring) at the future cell division site. The regulation of the ring assembly controls the timing and the location of cell division. One of the functions of the FtsZ ring is to recruit other cell division proteins to the septum to produce a new cell wall between the dividing cells. Binds GTP and shows GTPase activity. Mild overexpression impairs cell division, leading to very elongated cells. Isolated protein forms filaments and bundles in the presence of GTP. The sequence is that of Cell division protein FtsZ from Magnetospirillum gryphiswaldense (strain DSM 6361 / JCM 21280 / NBRC 15271 / MSR-1).